The chain runs to 168 residues: Zinc finger A20 and AN1 domain-containing stress-associated protein 1 (168 aa).

Residues 13–47 (PSEPKLCVKGCGFFGSPSNMNLCSKCYRDIRATEE) form an A20-type zinc finger. Zn(2+) is bound by residues C19, C23, C35, and C38. The interval 49–105 (TASAKAAVEKSLNPNKPKTQPQQSQEITQGVLGSGSSSSSTRGGDSAAAPLDPPKST) is disordered. Residues 60-76 (LNPNKPKTQPQQSQEIT) show a composition bias toward polar residues. The segment covering 82–94 (SGSSSSSTRGGDS) has biased composition (low complexity). Residues 103–149 (KSTATRCLSCNKKVGVTGFKCRCGSTFCGTHRYPESHECQFDFKGVA) form an AN1-type zinc finger. Residues C109, C112, C123, C125, C130, H133, H139, and C141 each contribute to the Zn(2+) site.

In terms of biological role, may be involved in environmental stress response. In Arabidopsis thaliana (Mouse-ear cress), this protein is Zinc finger A20 and AN1 domain-containing stress-associated protein 1 (SAP1).